The following is a 373-amino-acid chain: Aminomethyltransferase (373 aa).

It belongs to the GcvT family. The glycine cleavage system is composed of four proteins: P, T, L and H.

The catalysed reaction is N(6)-[(R)-S(8)-aminomethyldihydrolipoyl]-L-lysyl-[protein] + (6S)-5,6,7,8-tetrahydrofolate = N(6)-[(R)-dihydrolipoyl]-L-lysyl-[protein] + (6R)-5,10-methylene-5,6,7,8-tetrahydrofolate + NH4(+). Its function is as follows. The glycine cleavage system catalyzes the degradation of glycine. This chain is Aminomethyltransferase, found in Prochlorococcus marinus (strain SARG / CCMP1375 / SS120).